Reading from the N-terminus, the 220-residue chain is MTWSDILAEEKQKPYFKQILDFLACESAKGKVIFPTKENIFNAFKYTELDNLKVVILGQDPYHNYNQAHGLAFSVQKWVDIPPSLQNIYKELARSIPKFKTPNHGYLVDWAKQGVFLLNTTLTVEAHKANSHKDIGWETFTDTVINKISENKHNVVFMLWGSHARKKKVLIDSSRHLILESTHPSPLSAHRGFLGCNHFVDCNKYLIEKKDQKIDWNLLC.

Catalysis depends on Asp-60, which acts as the Proton acceptor.

Belongs to the uracil-DNA glycosylase (UDG) superfamily. UNG family.

The protein localises to the cytoplasm. The enzyme catalyses Hydrolyzes single-stranded DNA or mismatched double-stranded DNA and polynucleotides, releasing free uracil.. In terms of biological role, excises uracil residues from the DNA which can arise as a result of misincorporation of dUMP residues by DNA polymerase or due to deamination of cytosine. This Francisella tularensis subsp. holarctica (strain FTNF002-00 / FTA) protein is Uracil-DNA glycosylase.